The primary structure comprises 366 residues: 3-dehydroquinate synthase (366 aa).

Residues 69 to 74 (DGEAHK), 103 to 107 (GVIGD), 127 to 128 (TT), Lys-140, Lys-149, and 167 to 170 (TLNT) contribute to the NAD(+) site. Residues Glu-182, His-245, and His-262 each coordinate Zn(2+).

The protein belongs to the sugar phosphate cyclases superfamily. Dehydroquinate synthase family. The cofactor is Co(2+). Zn(2+) serves as cofactor. NAD(+) is required as a cofactor.

It is found in the cytoplasm. The catalysed reaction is 7-phospho-2-dehydro-3-deoxy-D-arabino-heptonate = 3-dehydroquinate + phosphate. It functions in the pathway metabolic intermediate biosynthesis; chorismate biosynthesis; chorismate from D-erythrose 4-phosphate and phosphoenolpyruvate: step 2/7. In terms of biological role, catalyzes the conversion of 3-deoxy-D-arabino-heptulosonate 7-phosphate (DAHP) to dehydroquinate (DHQ). The chain is 3-dehydroquinate synthase from Pseudomonas fluorescens (strain SBW25).